The primary structure comprises 368 residues: Protein ALTERED XYLOGLUCAN 9 (368 aa).

Residues Met-1–Met-32 lie on the Cytoplasmic side of the membrane. The helical transmembrane segment at Leu-33–Phe-53 threads the bilayer. Residues Pro-54–Leu-368 are Lumenal-facing. N-linked (GlcNAc...) asparagine glycans are attached at residues Asn-99, Asn-137, and Asn-235.

It is found in the golgi apparatus membrane. In terms of biological role, component of the plant cell wall polysaccharide acetylation pathway. Does not directly catalyze O-acetylation of xyloglucan but exhibits weak acetylesterase activity in vitro. In Arabidopsis thaliana (Mouse-ear cress), this protein is Protein ALTERED XYLOGLUCAN 9.